The following is a 127-amino-acid chain: Large-conductance mechanosensitive channel (127 aa).

Helical transmembrane passes span 9-29, 32-52, and 75-95; these read EFAM…GVAF, IVTA…LGGI, and VIDF…INLL.

Belongs to the MscL family. As to quaternary structure, homopentamer.

The protein resides in the cell inner membrane. Functionally, channel that opens in response to stretch forces in the membrane lipid bilayer. May participate in the regulation of osmotic pressure changes within the cell. This Legionella pneumophila subsp. pneumophila (strain Philadelphia 1 / ATCC 33152 / DSM 7513) protein is Large-conductance mechanosensitive channel.